The sequence spans 589 residues: MTRTTRIDTQEATKHKDLPPVPSPLSLSSNPNPECLMESKSLGRKNFKKLSLDASPVKSTSGSLRSSDMMSIKEPTSLRQKRQRPPPILHLPTASSSATSTPTSNITGSSSASSIQFAQKSPGSGVIVSQTLSRPSSAGGIPSSGYSSLNVNQSNRNVDPDNVVSTDMILNQISNLDLTSMNHHRQHYQNSHHHLPTTNRKRQTVISSISPTKSSAASSSLEPQIQSLPASSQSPIATTSSLKLNNKDLLTLKQLGSGNSGSVSKILHIPTQKTMAKKIIHIDSKSVIQTQIIRELRILHECHSPYIIEFYGACLNNNNTIVICMEYCNCGSLDKILPLCENKQFPTFVLKKLSFAILSGLTYLYTTHKIIHRDIKPNNVLMTHKGEFKLCDFGVSRELTNSLAMADTFVGTSMYMSPERIQGLDYGVKSDVWSTGLMLIELASGVPVWSEDDNNNDDDEDDEDDAYVRQGSIAAERNGQNSPSRSRKNKQKGNGYNSYNGPEGILDLLQRIVNEDAPTLTNKINPVTKLPYDKYLCQFIDLCLIKDDSVRKTPWQLLEDKEHFFKGVEEGVYDKEHKSWAKKIRKCKV.

Residues 1–18 (MTRTTRIDTQEATKHKDL) are compositionally biased toward basic and acidic residues. 2 disordered regions span residues 1–162 (MTRT…DPDN) and 185–233 (RQHY…ASSQ). Residues 24–33 (PLSLSSNPNP) are compositionally biased toward low complexity. Polar residues predominate over residues 57–69 (VKSTSGSLRSSDM). Positions 92-121 (PTASSSATSTPTSNITGSSSASSIQFAQKS) are enriched in low complexity. Composition is skewed to polar residues over residues 127–136 (IVSQTLSRPS) and 144–162 (SGYS…DPDN). The segment covering 185-203 (RQHYQNSHHHLPTTNRKRQ) has biased composition (basic residues). Positions 206–220 (ISSISPTKSSAASSS) are enriched in low complexity. Residues 221 to 233 (LEPQIQSLPASSQ) show a composition bias toward polar residues. The Protein kinase domain occupies 249-565 (LLTLKQLGSG…QLLEDKEHFF (317 aa)). ATP is bound by residues 255-263 (LGSGNSGSV) and K278. Catalysis depends on D374, which acts as the Proton acceptor. Phosphoserine is present on S402. Residue T408 is modified to Phosphothreonine. The interval 473–499 (IAAERNGQNSPSRSRKNKQKGNGYNSY) is disordered.

The protein belongs to the protein kinase superfamily. STE Ser/Thr protein kinase family. MAP kinase kinase subfamily.

The enzyme catalyses L-seryl-[protein] + ATP = O-phospho-L-seryl-[protein] + ADP + H(+). The catalysed reaction is L-threonyl-[protein] + ATP = O-phospho-L-threonyl-[protein] + ADP + H(+). It carries out the reaction L-tyrosyl-[protein] + ATP = O-phospho-L-tyrosyl-[protein] + ADP + H(+). This chain is Serine/threonine-protein kinase STE7 homolog (HST7), found in Candida albicans (strain SC5314 / ATCC MYA-2876) (Yeast).